The primary structure comprises 147 residues: Large ribosomal subunit protein uL13 (147 aa).

A disordered region spans residues 128 to 147 (PEHPHSAQQPVPYELKQVAQ).

Belongs to the universal ribosomal protein uL13 family. In terms of assembly, part of the 50S ribosomal subunit.

In terms of biological role, this protein is one of the early assembly proteins of the 50S ribosomal subunit, although it is not seen to bind rRNA by itself. It is important during the early stages of 50S assembly. The protein is Large ribosomal subunit protein uL13 of Mycobacterium bovis (strain BCG / Pasteur 1173P2).